Consider the following 673-residue polypeptide: Elongation factor G 1 (673 aa).

Residues 3 to 277 (KELRNIGIIA…SIVDYLPSPL (275 aa)) form the tr-type G domain. Residues 12–19 (AHIDAGKT), 76–80 (DTPGH), and 130–133 (NKMD) each bind GTP.

The protein belongs to the TRAFAC class translation factor GTPase superfamily. Classic translation factor GTPase family. EF-G/EF-2 subfamily.

Its subcellular location is the cytoplasm. Functionally, catalyzes the GTP-dependent ribosomal translocation step during translation elongation. During this step, the ribosome changes from the pre-translocational (PRE) to the post-translocational (POST) state as the newly formed A-site-bound peptidyl-tRNA and P-site-bound deacylated tRNA move to the P and E sites, respectively. Catalyzes the coordinated movement of the two tRNA molecules, the mRNA and conformational changes in the ribosome. This chain is Elongation factor G 1, found in Syntrophomonas wolfei subsp. wolfei (strain DSM 2245B / Goettingen).